The sequence spans 359 residues: MPSLLLLFTAALLSSWAQLLTDANSWWSLALNPVQRPEMFIIGAQPVCSQLPGLSPGQRKLCQLYQEHMAYIGEGAKTGIKECQHQFRQRRWNCSTVDNASVFGRVMQIGSRETAFTYAVSAAGVVNAISRACREGELSTCGCSRTARPKDLPRDWLWGGCGDNVEYGYRFAKEFVDAREREKNFAKGSEEQGRVLMNLQNNEAGRRAVYKMADVACKCHGVSGSCSLKTCWLQLAEFRKVGDRLKEKYDSAAAMRVTRKGRLELVNSRFTQPTPEDLVYVDPSPDYCLRNESTGSLGTQGRLCNKTSEGMDGCELMCCGRGYNQFKSVQVERCHCKFHWCCFVKCKKCTEIVDQYICK.

The N-terminal stretch at 1 to 17 (MPSLLLLFTAALLSSWA) is a signal peptide. The cysteines at positions 83 and 94 are disulfide-linked. 2 N-linked (GlcNAc...) asparagine glycosylation sites follow: Asn93 and Asn99. Disulfide bonds link Cys133/Cys141, Cys143/Cys161, Cys217/Cys231, Cys219/Cys226, Cys288/Cys319, Cys304/Cys314, Cys318/Cys358, Cys334/Cys349, Cys336/Cys346, and Cys341/Cys342. Ser223 carries O-palmitoleoyl serine; by PORCN lipidation. 2 N-linked (GlcNAc...) asparagine glycosylation sites follow: Asn291 and Asn305.

The protein belongs to the Wnt family. Interacts with PORCN. In terms of processing, palmitoleoylation is required for efficient binding to frizzled receptors. Depalmitoleoylation leads to Wnt signaling pathway inhibition.

Its subcellular location is the secreted. The protein resides in the extracellular space. It localises to the extracellular matrix. Ligand for members of the frizzled family of seven transmembrane receptors. Probable developmental protein. May be a signaling molecule which affects the development of discrete regions of tissues. Is likely to signal over only few cell diameters. The sequence is that of Protein Wnt-5b (WNT5B) from Pongo abelii (Sumatran orangutan).